The chain runs to 368 residues: 7,8-didemethyl-8-hydroxy-5-deazariboflavin synthase (368 aa).

A Radical SAM core domain is found at 36–272; that stretch reads LSYCRNVFLP…EEVSVQVPPN (237 aa). The [4Fe-4S] cluster site is built by cysteine 50, cysteine 54, and cysteine 57.

This sequence belongs to the radical SAM superfamily. CofG family. Consists of two subunits, CofG and CofH. [4Fe-4S] cluster is required as a cofactor.

The catalysed reaction is 5-amino-5-(4-hydroxybenzyl)-6-(D-ribitylimino)-5,6-dihydrouracil + S-adenosyl-L-methionine = 7,8-didemethyl-8-hydroxy-5-deazariboflavin + 5'-deoxyadenosine + L-methionine + NH4(+) + H(+). The protein operates within cofactor biosynthesis; coenzyme F0 biosynthesis. Functionally, catalyzes the radical-mediated synthesis of 7,8-didemethyl-8-hydroxy-5-deazariboflavin from 5-amino-5-(4-hydroxybenzyl)-6-(D-ribitylimino)-5,6-dihydrouracil. The sequence is that of 7,8-didemethyl-8-hydroxy-5-deazariboflavin synthase from Haloarcula marismortui (strain ATCC 43049 / DSM 3752 / JCM 8966 / VKM B-1809) (Halobacterium marismortui).